We begin with the raw amino-acid sequence, 454 residues long: Mitochondrial distribution and morphology protein 10 (454 aa).

The protein belongs to the MDM10 family. Component of the ER-mitochondria encounter structure (ERMES) or MDM complex, composed of MMM1, MDM10, MDM12 and MDM34. Associates with the mitochondrial outer membrane sorting assembly machinery SAM(core) complex.

It localises to the mitochondrion outer membrane. Functionally, component of the ERMES/MDM complex, which serves as a molecular tether to connect the endoplasmic reticulum and mitochondria. Components of this complex are involved in the control of mitochondrial shape and protein biogenesis and may function in phospholipid exchange. MDM10 is involved in the late assembly steps of the general translocase of the mitochondrial outer membrane (TOM complex). Functions in the TOM40-specific route of the assembly of outer membrane beta-barrel proteins, including the association of TOM40 with the receptor TOM22 and small TOM proteins. Can associate with the SAM(core) complex as well as the MDM12-MMM1 complex, both involved in late steps of the major beta-barrel assembly pathway, that is responsible for biogenesis of all outer membrane beta-barrel proteins. May act as a switch that shuttles between both complexes and channels precursor proteins into the TOM40-specific pathway. Plays a role in mitochondrial morphology and in the inheritance of mitochondria. The polypeptide is Mitochondrial distribution and morphology protein 10 (Candida tropicalis (strain ATCC MYA-3404 / T1) (Yeast)).